A 265-amino-acid polypeptide reads, in one-letter code: Indole-3-glycerol phosphate synthase (265 aa).

It belongs to the TrpC family.

It catalyses the reaction 1-(2-carboxyphenylamino)-1-deoxy-D-ribulose 5-phosphate + H(+) = (1S,2R)-1-C-(indol-3-yl)glycerol 3-phosphate + CO2 + H2O. The protein operates within amino-acid biosynthesis; L-tryptophan biosynthesis; L-tryptophan from chorismate: step 4/5. This chain is Indole-3-glycerol phosphate synthase, found in Xanthomonas axonopodis pv. citri (strain 306).